The sequence spans 68 residues: Long neurotoxin 1 (68 aa).

Disulfide bonds link Cys3–Cys20, Cys13–Cys41, Cys26–Cys30, Cys45–Cys56, and Cys57–Cys62.

This sequence belongs to the three-finger toxin family. Long-chain subfamily. Type II alpha-neurotoxin sub-subfamily. In terms of tissue distribution, expressed by the venom gland.

The protein localises to the secreted. Functionally, binds with high affinity to muscular (alpha-1/CHRNA1) and neuronal (alpha-7/CHRNA7) nicotinic acetylcholine receptor (nAChR) and inhibits acetylcholine from binding to the receptor, thereby impairing neuromuscular and neuronal transmission. The protein is Long neurotoxin 1 of Aspidelaps scutatus (Shield-nose snake).